A 223-amino-acid polypeptide reads, in one-letter code: Deoxyribose-phosphate aldolase (223 aa).

The Proton donor/acceptor role is filled by Asp-92. Lys-153 (schiff-base intermediate with acetaldehyde) is an active-site residue. Lys-182 acts as the Proton donor/acceptor in catalysis.

It belongs to the DeoC/FbaB aldolase family. DeoC type 1 subfamily.

Its subcellular location is the cytoplasm. The enzyme catalyses 2-deoxy-D-ribose 5-phosphate = D-glyceraldehyde 3-phosphate + acetaldehyde. It functions in the pathway carbohydrate degradation; 2-deoxy-D-ribose 1-phosphate degradation; D-glyceraldehyde 3-phosphate and acetaldehyde from 2-deoxy-alpha-D-ribose 1-phosphate: step 2/2. Its function is as follows. Catalyzes a reversible aldol reaction between acetaldehyde and D-glyceraldehyde 3-phosphate to generate 2-deoxy-D-ribose 5-phosphate. The polypeptide is Deoxyribose-phosphate aldolase (Mycoplasmoides gallisepticum (strain R(low / passage 15 / clone 2)) (Mycoplasma gallisepticum)).